The chain runs to 382 residues: ORC1-type DNA replication protein 1 (382 aa).

Residues 63-67 (TGKTA), Tyr-205, and Arg-217 contribute to the ATP site.

Belongs to the CDC6/cdc18 family. As to quaternary structure, monomer. Interacts with MCM via the WH domain. In terms of processing, autophosphorylated on a serine. Phosphorylation is stimulated by binding to MCM. Both single-stranded DNA and double-stranded DNA inhibit the phosphorylation reaction.

In terms of biological role, involved in regulation of DNA replication. May play an essential role in origin recognition. Binds to DNA, with a preference for origin-specific double-stranded sequences. Does not bind single-stranded DNA. Inhibits MCM helicase activity but does not affect its oligomeric state. This Methanothermobacter thermautotrophicus (strain ATCC 29096 / DSM 1053 / JCM 10044 / NBRC 100330 / Delta H) (Methanobacterium thermoautotrophicum) protein is ORC1-type DNA replication protein 1 (cdc6-1).